Here is a 363-residue protein sequence, read N- to C-terminus: UDP-N-acetylglucosamine--N-acetylmuramyl-(pentapeptide) pyrophosphoryl-undecaprenol N-acetylglucosamine transferase (363 aa).

UDP-N-acetyl-alpha-D-glucosamine is bound by residues 12–14, Asn-122, Arg-164, Ser-191, Ile-245, and Gln-290; that span reads TGG.

This sequence belongs to the glycosyltransferase 28 family. MurG subfamily.

It localises to the cell membrane. It carries out the reaction di-trans,octa-cis-undecaprenyl diphospho-N-acetyl-alpha-D-muramoyl-L-alanyl-D-glutamyl-meso-2,6-diaminopimeloyl-D-alanyl-D-alanine + UDP-N-acetyl-alpha-D-glucosamine = di-trans,octa-cis-undecaprenyl diphospho-[N-acetyl-alpha-D-glucosaminyl-(1-&gt;4)]-N-acetyl-alpha-D-muramoyl-L-alanyl-D-glutamyl-meso-2,6-diaminopimeloyl-D-alanyl-D-alanine + UDP + H(+). It functions in the pathway cell wall biogenesis; peptidoglycan biosynthesis. Functionally, cell wall formation. Catalyzes the transfer of a GlcNAc subunit on undecaprenyl-pyrophosphoryl-MurNAc-pentapeptide (lipid intermediate I) to form undecaprenyl-pyrophosphoryl-MurNAc-(pentapeptide)GlcNAc (lipid intermediate II). In Lawsonia intracellularis (strain PHE/MN1-00), this protein is UDP-N-acetylglucosamine--N-acetylmuramyl-(pentapeptide) pyrophosphoryl-undecaprenol N-acetylglucosamine transferase.